The following is a 301-amino-acid chain: Putative glycosyltransferase MJ1113 (301 aa).

Helical transmembrane passes span 2 to 22 (GHYF…SAVL), 62 to 82 (FIPF…IIGI), 95 to 115 (LILL…NSYV), 117 to 137 (LIEI…TNML), 140 to 160 (FNGL…LVLF), 164 to 184 (YTTG…LLIF), 191 to 211 (VFPG…LAVV), and 280 to 300 (VTVL…ISLI).

Belongs to the glycosyltransferase 4 family.

It localises to the cell membrane. The sequence is that of Putative glycosyltransferase MJ1113 from Methanocaldococcus jannaschii (strain ATCC 43067 / DSM 2661 / JAL-1 / JCM 10045 / NBRC 100440) (Methanococcus jannaschii).